A 405-amino-acid chain; its full sequence is Arginine deiminase (405 aa).

Catalysis depends on cysteine 395, which acts as the Amidino-cysteine intermediate.

This sequence belongs to the arginine deiminase family.

The protein localises to the cytoplasm. It carries out the reaction L-arginine + H2O = L-citrulline + NH4(+). Its pathway is amino-acid degradation; L-arginine degradation via ADI pathway; carbamoyl phosphate from L-arginine: step 1/2. This Rhodococcus jostii (strain RHA1) protein is Arginine deiminase.